Here is a 1666-residue protein sequence, read N- to C-terminus: Complement C3 (1666 aa).

The first 22 residues, 1 to 22 (MGPAAGPSLLLLLLASVSLALG), serve as a signal peptide directing secretion. Phosphoserine occurs at positions 70, 296, and 302. 13 disulfide bridges follow: cysteine 557–cysteine 821, cysteine 630–cysteine 666, cysteine 698–cysteine 725, cysteine 699–cysteine 732, cysteine 712–cysteine 733, cysteine 878–cysteine 1517, cysteine 1106–cysteine 1163, cysteine 1363–cysteine 1493, cysteine 1394–cysteine 1462, cysteine 1510–cysteine 1515, cysteine 1522–cysteine 1593, cysteine 1540–cysteine 1664, and cysteine 1640–cysteine 1649. The residue at position 676 (serine 676) is a Phosphoserine. Positions 698 to 733 (CCEDGMRENPMQFSCQRRARYVSLGEACVKAFLDCC) constitute an Anaphylatoxin-like domain. N-linked (GlcNAc...) asparagine glycosylation is present at asparagine 944. The residue at position 973 (serine 973) is a Phosphoserine. Positions 1015-1018 (CGEQ) form a cross-link, isoglutamyl cysteine thioester (Cys-Gln). A Phosphoserine modification is found at serine 1326. The NTR domain maps to 1522–1664 (CFIQLPEKIT…FTENMVVFGC (143 aa)). Serine 1576 carries the phosphoserine modification. N-linked (GlcNAc...) asparagine glycosylation occurs at asparagine 1620. The interaction with CFP/properdin stretch occupies residues 1637-1662 (AEECQDEENQQQCQDLGTFTENMVVF).

As to quaternary structure, in absence of complement activation, the C3 precursor is first processed by the removal of 4 Arg residues, forming two chains, beta and alpha, linked by a disulfide bond. Complement C3b is composed of complement C3b and complement C3 beta chains that are associated via disulfide bonds. Non-enzymatic component of the C5 convertase, also named C4bC2bC3b, composed of the serine protease complement C2b (C2), complement C3b, as well as complement C4b (C4). Non-enzymatic component of the C5 convertase of the alternative complement pathways composed of the serine protease complement CFB and complement C3b. Interacts with CFP; interaction takes place together with CFB in the alternative complement system and allows the complex to become active. Interacts with CR1 (via Sushi 8 and Sushi 9 domains). Interacts with CFH. In terms of assembly, interacts with CFH. Interacts with CR2. As to quaternary structure, during pregnancy, C3dg exists as a complex (probably a 2:2:2 heterohexamer) with AGT and the proform of PRG2. Interacts with CR2 (via the N-terminal Sushi domains 1 and 2). Post-translationally, C3 precursor is first processed by the removal of 4 Arg residues, forming two chains, beta and alpha, linked by a disulfide bond. During activation of the complement systems, the alpha chain is cleaved into C3a and C3b by the C3 convertase: C3b stays linked to the beta chain, while C3a is released in the plasma. The alpha chain is cleaved by the serine protease complement C2b component of the C3 convertase to generate C3a and C3b following activation by the classical, lectin and GZMK complement systems. The alpha chain is cleaved by CFB component of the C3 convertase to generate C3a and C3b following activation by the alternative complement system. C3a is further processed by carboxypeptidases to release the C-terminal arginine residue generating the acylation stimulating protein (ASP). Levels of ASP are increased in adipocytes in the postprandial period and by insulin and dietary chylomicrons. In terms of processing, complement C3b is rapidly split in two positions by factor I (CFI) and a cofactor (CFH) to form iC3b (inactivated C3b) and C3f which is released. CFI and CFH catalyze proteolytic degradation of already-deposited complement C3b. Then iC3b is slowly cleaved (possibly by CFI) to form C3c (beta chain + alpha' chain fragment 1 + alpha' chain fragment 2), C3dg and C3f. Other proteases produce other fragments such as C3d or C3g. Post-translationally, upon activation, the internal thioester bond reacts with carbohydrate antigens on the target surface to form amide or ester bonds, leading to covalent association with the surface of pathogens. Complement C3b interacts with complement C4b via a thioester linkage. In terms of processing, phosphorylated by FAM20C in the extracellular medium.

Its subcellular location is the secreted. It localises to the cell surface. With respect to regulation, complement activation is inhibited by VSIG4. Functionally, precursor of non-enzymatic components of the classical, alternative, lectin and GZMK complement pathways, which consist in a cascade of proteins that leads to phagocytosis and breakdown of pathogens and signaling that strengthens the adaptive immune system. In terms of biological role, non-enzymatic component of C5 convertase. Generated following cleavage by C3 convertase, it covalently attaches to the surface of pathogens, where it acts as an opsonin that marks the surface of antigens for removal. Complement C3b binds covalently via its reactive thioester, to cell surface carbohydrates or immune aggregates. Together with complement C4b, it then recruits the serine protease complement C2b to form the C5 convertase, which cleaves and activate C5, the next component of the complement pathways. In the alternative complement pathway, recruits the serine protease CFB to form the C5 convertase that cleaves and activates C5. Its function is as follows. Mediator of local inflammatory process released following cleavage by C3 convertase. Acts by binding to its receptor, C3AR1, activating G protein-coupled receptor signaling, promoting the phosphorylation, ARRB2-mediated internalization and endocytosis of C3AR1. C3a anaphylatoxin stimulates the activation of immune cells such as mast cells and basophilic leukocytes to release inflammation agents, such as cytokines, chemokines and histamine, which promote inflammation development. Also acts as potent chemoattractant for the migration of macrophages and neutrophils to the inflamed tissues, resulting in neutralization of the inflammatory triggers by multiple ways, such as phagocytosis and generation of reactive oxidants. Adipogenic hormone that stimulates triglyceride synthesis and glucose transport in adipocytes, regulating fat storage and playing a role in postprandial triglyceride clearance. Appears to stimulate triglyceride synthesis via activation of the PLC, MAPK and AKT signaling pathways. Acts by binding to its receptor, C5AR2, activating G protein-coupled receptor signaling, promoting the phosphorylation, ARRB2-mediated internalization and endocytosis of C5AR2. Functionally, acts as a chemoattractant for neutrophils in chronic inflammation. The sequence is that of Complement C3 from Cavia porcellus (Guinea pig).